The sequence spans 328 residues: Nickel import system permease protein NikB (328 aa).

6 helical membrane-spanning segments follow: residues 11–31 (LIQM…LMKL), 104–124 (LLIS…LGII), 139–159 (VIST…LLFI), 170–190 (ILSQ…AYII), 229–249 (ILPI…GTVV), and 279–299 (VLFI…LTLL). The ABC transmembrane type-1 domain maps to 100-297 (APITLLISFS…IINTIADLLT (198 aa)).

The protein belongs to the binding-protein-dependent transport system permease family. OppBC subfamily. In terms of assembly, the complex is composed of two ATP-binding proteins (NikD and NikE), two transmembrane proteins (NikB and NikC) and a solute-binding protein (NikA).

Its subcellular location is the cell membrane. Functionally, part of the ABC transporter complex NikABCDE (Opp2) involved in nickel import. Probably responsible for the translocation of the substrate across the membrane. This is Nickel import system permease protein NikB from Staphylococcus aureus (strain MRSA252).